The following is a 122-amino-acid chain: Serum amyloid A-3 protein (122 aa).

The signal sequence occupies residues 1 to 18; sequence MKLSIGIIFCFLILGVNS. Residues 88–122 form a disordered region; the sequence is GRGAEDSKADQEANQWGRSGNDPNHFRPKGLPDKY. The span at 99 to 109 shows a compositional bias: polar residues; it reads EANQWGRSGND.

It belongs to the SAA family. Expressed by the liver; secreted in plasma. Expressed in synovial fibroblasts.

It localises to the secreted. Functionally, major acute phase reactant. Apolipoprotein of the HDL complex. In vitro exhibits antimicrobial activity against Escherichia coli, Streptococcus uberis and Pseudomonas aeruginosa. This chain is Serum amyloid A-3 protein (SAA3), found in Oryctolagus cuniculus (Rabbit).